The sequence spans 217 residues: Ubiquitin-conjugating enzyme E2 1 (217 aa).

The UBC core domain maps to 4–151 (NRSRRIAKEL…AREWTSSYAA (148 aa)). The active-site Glycyl thioester intermediate is the Cys-89.

The protein belongs to the ubiquitin-conjugating enzyme family.

It localises to the cytoplasm. It is found in the nucleus. The enzyme catalyses S-ubiquitinyl-[E1 ubiquitin-activating enzyme]-L-cysteine + [E2 ubiquitin-conjugating enzyme]-L-cysteine = [E1 ubiquitin-activating enzyme]-L-cysteine + S-ubiquitinyl-[E2 ubiquitin-conjugating enzyme]-L-cysteine.. Its pathway is protein modification; protein ubiquitination. In terms of biological role, catalyzes the covalent attachment of ubiquitin to other proteins. Functions in degradation of misfolded or regulated proteins localized in the endoplasmic reticulum (ER) lumen or membrane via the ubiquitin-proteasome system. Cognate E2 conjugating enzyme for the HRD1 ubiquitin ligase complex, which is part of the ERAD-L and ERAD-M pathways responsible for the rapid degradation of soluble lumenal and membrane proteins with misfolded lumenal domains (ERAD-L), or ER-membrane proteins with misfolded transmembrane domains (ERAD-M). This Schizosaccharomyces pombe (strain 972 / ATCC 24843) (Fission yeast) protein is Ubiquitin-conjugating enzyme E2 1 (ubc1).